Consider the following 289-residue polypeptide: MYB transcription factor 69 (289 aa).

HTH myb-type domains are found at residues 9 to 61 and 62 to 116; these read KAGV…TNYL and RPGI…KKKL. 2 consecutive DNA-binding regions (H-T-H motif) follow at residues 37-61 and 89-112; these read WRAV…TNYL and WAAI…NTHL. Disordered regions lie at residues 127–162 and 225–252; these read APPR…ADST and SSAI…QQQQ. Positions 139–154 are enriched in basic and acidic residues; sequence ADCRRHDMTRSSKDSH.

Mainly expressed in highly lignified tissues such as vascular tissues.

It localises to the nucleus. Transcription factor that binds to the promoter of MYB31 and MYB42 and activates directly their expression, thus repressing lignin biosynthesis. In Zea mays (Maize), this protein is MYB transcription factor 69.